Reading from the N-terminus, the 196-residue chain is MPIGVPKVPFRSPGEGDTSWVDIYNRLYRERLFFLGQEVDTEISNQLISLMIYLSIEKDTKDLYLFINSPGGWVISGMAIYDTMQFVRPDVQTICMGLAASIASFILVGGAITKRIAFPHARVMIHQPASSFYEAQTGEFILEAEELLKLRETITRVYVQRTGKPIWVISEDMERDVFMSATEAQAYGIVDLVAVQ.

The Nucleophile role is filled by Ser101. Residue His126 is part of the active site.

Belongs to the peptidase S14 family. As to quaternary structure, component of the chloroplastic Clp protease core complex which consist of at least 16 proteins: CLPP4 (3 copies), CLPP5 (3 copies), CLPR4 (2 copies), ClpP1 (1 copy), CLPP6 (1 copy), CLPR2 (1 copy), CLPT1 (1 copy), CLPT2 (1 copy) and 3 copies of CLPP3 and/or CLPR1 and/or CLPR3. The core complex is organized in two heptameric rings, one containing CLPP3,4,5,6 in a 1:2:3:1 ratio and the other CLPP1 and CLPR1,2,3,4 in a 3:1:1:1:1 ratio. As to expression, mostly expressed in leaves. Also detected in stems, and to a lower extent, in roots (at protein level).

The protein resides in the plastid. It is found in the chloroplast stroma. The catalysed reaction is Hydrolysis of proteins to small peptides in the presence of ATP and magnesium. alpha-casein is the usual test substrate. In the absence of ATP, only oligopeptides shorter than five residues are hydrolyzed (such as succinyl-Leu-Tyr-|-NHMec, and Leu-Tyr-Leu-|-Tyr-Trp, in which cleavage of the -Tyr-|-Leu- and -Tyr-|-Trp bonds also occurs).. Functionally, cleaves peptides in various proteins in a process that requires ATP hydrolysis. Has a chymotrypsin-like activity. Plays a major role in the degradation of misfolded proteins. In Arabidopsis thaliana (Mouse-ear cress), this protein is Chloroplastic ATP-dependent Clp protease proteolytic subunit 1.